The chain runs to 809 residues: H(+)/Cl(-) exchange transporter 7 (809 aa).

Over 1 to 130 (MANVSKKVSW…TAFRTVEIKR (130 aa)) the chain is Cytoplasmic. Phosphoserine occurs at positions 9 and 64. The next 2 membrane-spanning stretches (helical) occupy residues 131 to 163 (WVIC…YRLV) and 178 to 201 (FSLL…VAFI). Residues 207 to 211 (GSGIP) carry the Selectivity filter part_1 motif. Serine 208 is a chloride binding site. The segment at residues 210–217 (IPQIKCFL) is an intramembrane region (helical). 2 consecutive transmembrane segments (helical) span residues 227–245 (RLKT…VVGG) and 251–268 (EGPM…ISQG). Residues 249–253 (GKEGP) carry the Selectivity filter part_2 motif. 2 intramembrane regions (helical) span residues 292–304 (FVSA…VSAA) and 308–316 (PVGGVLFSL). The next 5 membrane-spanning stretches (helical) occupy residues 326–345 (FLTW…LNFV), 379–409 (IPIF…FRIR), 414–436 (PCLQ…FVLI), 491–511 (PMTL…TYGL), and 516–539 (GVFI…LSYI). Positions 516-520 (GVFIP) match the Selectivity filter part_3 motif. Phenylalanine 518 lines the chloride pocket. An intramembrane region (helical) is located at residues 549–563 (GKYALMGAAAQLGGI). The segment at residues 564-566 (VRM) is an intramembrane region (note=Loop between two helices). The segment at residues 567–578 (TLSLTVIMMEAT) is an intramembrane region (helical). Positions 579 to 582 (SSVT) form an intramembrane region, note=Loop between two helices. A helical transmembrane segment spans residues 583–601 (YGFPIMLVLMTAKIVGDVF). Topologically, residues 602-809 (IEGLYDMHIQ…GLEELSLAQT (208 aa)) are cytoplasmic. Position 606 (tyrosine 606) interacts with chloride. CBS domains follow at residues 635–699 (MSTP…VFVE) and 745–803 (MNPS…GLEE). Residues 662-664 (HNG) and 787-790 (TRKD) contribute to the ATP site. A Phosphoserine modification is found at serine 805.

It belongs to the chloride channel (TC 2.A.49) family. ClC-7/CLCN7 subfamily. In terms of assembly, chloride channel 7 are heteromers of alpha (CLCN7) and beta (OSTM1) subunits.

The protein localises to the lysosome membrane. The enzyme catalyses 2 chloride(in) + H(+)(out) = 2 chloride(out) + H(+)(in). In terms of biological role, slowly voltage-gated channel mediating the exchange of chloride ions against protons. Functions as antiporter and contributes to the acidification of the lysosome lumen and may be involved in maintaining lysosomal pH. The CLC channel family contains both chloride channels and proton-coupled anion transporters that exchange chloride or another anion for protons. The presence of conserved gating glutamate residues is typical for family members that function as antiporters. The sequence is that of H(+)/Cl(-) exchange transporter 7 (CLCN7) from Bos taurus (Bovine).